A 1007-amino-acid chain; its full sequence is Aldehyde reductase lnbA (1007 aa).

Positions 35 to 428 (QVRQSPSSIA…GRVDHQIKVR (394 aa)) are adenylation (A) domain. One can recognise a Carrier domain in the interval 540 to 617 (TLCQDTQTVL…ALASIIDHAK (78 aa)). An O-(pantetheine 4'-phosphoryl)serine modification is found at serine 577. Positions 659–998 (IFITGATGFV…PTLDCSLLKK (340 aa)) are short-chain dehydrogenase/reductase (R) domain.

It belongs to the NRP synthetase family.

The enzyme catalyses L-tyrosinal + AMP + diphosphate + NADP(+) = L-tyrosine + ATP + NADPH + H(+). The protein operates within secondary metabolite biosynthesis. Functionally, non-canonical nonribosomal peptide synthetase; part of the lnb gene cluster that mediates the biosynthesis of diastereomeric piperazines. Lna and lnb clusters encode sets of enzymes that produce overlapping sets of previously undescribed metabolites such as piperazinomycin-like metabolites or morpholine. The lna and lnb biosynthetic pathways appear to be part of a signaling network that controls the formation of sclerotia, a resilient overwintering structure. One primary function of the non-canonical nonribosomal peptide synthetases lnaA and lnbA consists in the reduction of L-tyrosine. The presence in the clusters of tailoring enzymes such as the oxidoreductases lnaB, lnbB, lnaE or lnbE, as well as of the cytochrome P450 monooxygenases lnaC, lnaD, or lnbC, might explain formation of various diastereomeric piperazines. The chain is Aldehyde reductase lnbA from Aspergillus flavus (strain ATCC 200026 / FGSC A1120 / IAM 13836 / NRRL 3357 / JCM 12722 / SRRC 167).